The sequence spans 200 residues: Methylamine utilization protein MauD (200 aa).

The chain crosses the membrane as a helical span at residues 4 to 24 (FLIASNILLWLAFLGVTVVML). A Thioredoxin domain is found at 49 to 183 (PDIGDAAPEF…LESLLEADRT (135 aa)).

The protein resides in the membrane. It participates in one-carbon metabolism; methylamine degradation. Functionally, may be specifically involved in the processing, transport, and/or maturation of the MADH beta-subunit. The sequence is that of Methylamine utilization protein MauD (mauD) from Paracoccus denitrificans.